The primary structure comprises 457 residues: 1-carboxybiuret hydrolase subunit AtzE (457 aa).

Residues Lys74 and Ser150 each act as charge relay system in the active site. Catalysis depends on Ser174, which acts as the Acyl-ester intermediate.

This sequence belongs to the amidase family. In terms of assembly, heterotetramer consisting of 2 AtzE and 2 AtzG subunits.

The enzyme catalyses 1-carboxybiuret + H2O = urea-1,3-dicarboxylate + NH4(+). Its pathway is xenobiotic degradation; atrazine degradation. Its function is as follows. Hydrolyzes 1-carboxybiuret to urea-1,3-dicarboxylate and NH(3). This chain is 1-carboxybiuret hydrolase subunit AtzE, found in Pseudomonas sp. (strain ADP).